The primary structure comprises 87 residues: Mitochondrial import protein 2 (87 aa).

Over 1–53 (MADSEDTSVILQGIDTINSVEGLEEDGYLSDEDTSLSNELADAQRQWEESLQQ) the chain is Cytoplasmic. The chain crosses the membrane as a helical span at residues 54–71 (LNKLLNWVLLPLLGKYIG). Over 72–87 (RRMAKTLWSRFIEHFV) the chain is Mitochondrial intermembrane.

It belongs to the MIM2 family. In terms of assembly, component of the MIM complex containing at least MIM1 and MIM2. Interacts with MIM1; interaction is direct.

The protein localises to the mitochondrion outer membrane. Functionally, component of the MIM complex required for outer membrane protein import. Involved in import of the subset of proteins with multiple alpha-helical transmembrane segments, including UGO1, TOM20 and FZO1. This Saccharomyces cerevisiae (strain ATCC 204508 / S288c) (Baker's yeast) protein is Mitochondrial import protein 2.